Reading from the N-terminus, the 326-residue chain is Cinnamoyl-CoA reductase CAD2 (326 aa).

NADP(+) contacts are provided by residues 14–20, Arg39, Lys46, 66–67, and 86–88; these read GASGYIA, NL, and TAS. Residues Ser130, Tyr136, Arg141, and Tyr165 each coordinate (E)-coniferaldehyde. NADP(+) is bound by residues Tyr165, Lys169, 192–195, and Ser207; that span reads PAMV. Catalysis depends on Lys169, which acts as the Proton donor. Residues Met194, Ser207, Phe226, Val257, and Tyr290 each contribute to the (E)-coniferaldehyde site.

The protein belongs to the NAD(P)-dependent epimerase/dehydratase family. Dihydroflavonol-4-reductase subfamily.

It is found in the cytoplasm. It catalyses the reaction (E)-cinnamaldehyde + NADP(+) + CoA = (E)-cinnamoyl-CoA + NADPH + H(+). It carries out the reaction (E)-coniferaldehyde + NADP(+) + CoA = (E)-feruloyl-CoA + NADPH + H(+). The enzyme catalyses (E)-4-coumaraldehyde + NADP(+) + CoA = (E)-4-coumaroyl-CoA + NADPH + H(+). Its pathway is aromatic compound metabolism; phenylpropanoid biosynthesis. In terms of biological role, involved in lignin biosynthesis. Regulates the monolignol composition by catalyzing the conversion of cinnamoyl-CoAs into their corresponding cinnamaldehydes. Can use coumaraldehyde and coniferaldehyde as substrates, but barely sinapaldehyde. The chain is Cinnamoyl-CoA reductase CAD2 from Medicago truncatula (Barrel medic).